A 179-amino-acid polypeptide reads, in one-letter code: MNETLKEELLQSIREVKDYPKKGILFKDITTLLNYPKLFNKLIDTLKKRYLALNIDFIVGIEARGFILGSALAYALGVGFVPVRKKGKLPAHTLSQSYSLEYGSDSIEIHSDAFRGIKGVRVVLIDDLLATGGTALASLELIKALQAECIEACFLIGLKELPGIQLLEERVKTFCLLEC.

This sequence belongs to the purine/pyrimidine phosphoribosyltransferase family. As to quaternary structure, homodimer.

The protein localises to the cytoplasm. It catalyses the reaction AMP + diphosphate = 5-phospho-alpha-D-ribose 1-diphosphate + adenine. It functions in the pathway purine metabolism; AMP biosynthesis via salvage pathway; AMP from adenine: step 1/1. Catalyzes a salvage reaction resulting in the formation of AMP, that is energically less costly than de novo synthesis. This chain is Adenine phosphoribosyltransferase, found in Helicobacter pylori (strain ATCC 700392 / 26695) (Campylobacter pylori).